The sequence spans 99 residues: Nucleoid-associated protein SEQ_0368 (99 aa).

The protein belongs to the YbaB/EbfC family. As to quaternary structure, homodimer.

The protein resides in the cytoplasm. It is found in the nucleoid. In terms of biological role, binds to DNA and alters its conformation. May be involved in regulation of gene expression, nucleoid organization and DNA protection. The polypeptide is Nucleoid-associated protein SEQ_0368 (Streptococcus equi subsp. equi (strain 4047)).